The primary structure comprises 122 residues: uncharacterized protein (122 aa).

2 disordered regions span residues 1–30 (MGRE…DQPE) and 96–122 (FKSC…DAMG).

This is an uncharacterized protein from Homo sapiens (Human).